We begin with the raw amino-acid sequence, 147 residues long: Cytochrome c oxidase subunit 3 (147 aa).

4 helical membrane passes run 13–33, 48–68, 83–103, and 125–145; these read FQIP…VTWA, GLFI…YEYF, FFMA…FLLI, and AWYW…IYWW.

This sequence belongs to the cytochrome c oxidase subunit 3 family. Component of the cytochrome c oxidase (complex IV, CIV), a multisubunit enzyme composed of a catalytic core of 3 subunits and several supernumerary subunits. The complex exists as a monomer or a dimer and forms supercomplexes (SCs) in the inner mitochondrial membrane with ubiquinol-cytochrome c oxidoreductase (cytochrome b-c1 complex, complex III, CIII).

The protein localises to the mitochondrion inner membrane. The enzyme catalyses 4 Fe(II)-[cytochrome c] + O2 + 8 H(+)(in) = 4 Fe(III)-[cytochrome c] + 2 H2O + 4 H(+)(out). Functionally, component of the cytochrome c oxidase, the last enzyme in the mitochondrial electron transport chain which drives oxidative phosphorylation. The respiratory chain contains 3 multisubunit complexes succinate dehydrogenase (complex II, CII), ubiquinol-cytochrome c oxidoreductase (cytochrome b-c1 complex, complex III, CIII) and cytochrome c oxidase (complex IV, CIV), that cooperate to transfer electrons derived from NADH and succinate to molecular oxygen, creating an electrochemical gradient over the inner membrane that drives transmembrane transport and the ATP synthase. Cytochrome c oxidase is the component of the respiratory chain that catalyzes the reduction of oxygen to water. Electrons originating from reduced cytochrome c in the intermembrane space (IMS) are transferred via the dinuclear copper A center (CU(A)) of subunit 2 and heme A of subunit 1 to the active site in subunit 1, a binuclear center (BNC) formed by heme A3 and copper B (CU(B)). The BNC reduces molecular oxygen to 2 water molecules using 4 electrons from cytochrome c in the IMS and 4 protons from the mitochondrial matrix. This chain is Cytochrome c oxidase subunit 3 (COIII), found in Spodoptera frugiperda (Fall armyworm).